We begin with the raw amino-acid sequence, 257 residues long: Acetylglutamate kinase (257 aa).

Substrate contacts are provided by residues 43 to 44, R65, and N157; that span reads GG. Residues 180–185 and 208–210 each bind ATP; these read DVSGIL and IIT.

It belongs to the acetylglutamate kinase family. ArgB subfamily. As to quaternary structure, homodimer.

Its subcellular location is the cytoplasm. It catalyses the reaction N-acetyl-L-glutamate + ATP = N-acetyl-L-glutamyl 5-phosphate + ADP. It functions in the pathway amino-acid biosynthesis; L-arginine biosynthesis; N(2)-acetyl-L-ornithine from L-glutamate: step 2/4. Catalyzes the ATP-dependent phosphorylation of N-acetyl-L-glutamate. This chain is Acetylglutamate kinase, found in Salmonella paratyphi B (strain ATCC BAA-1250 / SPB7).